Reading from the N-terminus, the 321-residue chain is Replication factor C small subunit (321 aa).

Residue 43–50 (GFAGVGKT) coordinates ATP.

It belongs to the activator 1 small subunits family. RfcS subfamily. In terms of assembly, heteromultimer composed of small subunits (RfcS) and large subunits (RfcL).

Part of the RFC clamp loader complex which loads the PCNA sliding clamp onto DNA. This Methanosphaera stadtmanae (strain ATCC 43021 / DSM 3091 / JCM 11832 / MCB-3) protein is Replication factor C small subunit.